Consider the following 172-residue polypeptide: Podoplanin (172 aa).

The N-terminal stretch at Met-1–Gly-22 is a signal peptide. Residues Gly-23–Leu-141 are Extracellular-facing. Thr-37, Thr-51, Thr-52, Thr-53, and Thr-56 each carry an O-linked (GalNAc...) threonine glycan. The disordered stretch occupies residues Lys-49–Lys-132. Positions Thr-51–Thr-63 are enriched in polar residues. Asn-60 carries an N-linked (GlcNAc...) asparagine glycan. Residues Thr-63, Thr-71, and Thr-77 are each glycosylated (O-linked (GalNAc...) threonine). The span at Gln-72 to Leu-81 shows a compositional bias: basic and acidic residues. A glycan (O-linked (GalNAc...) serine) is linked at Ser-85. Thr-86 carries O-linked (GalNAc...) threonine glycosylation. A glycan (O-linked (GalNAc...) serine) is linked at Ser-87. O-linked (GalNAc...) threonine glycosylation is present at Thr-89. Ser-90 carries an O-linked (GalNAc...) serine glycan. A compositionally biased stretch (basic and acidic residues) spans Ser-90–Ser-99. 5 O-linked (GalNAc...) threonine glycosylation sites follow: Thr-100, Thr-101, Thr-102, Thr-107, and Thr-115. The segment covering Thr-100–His-109 has biased composition (low complexity). Basic and acidic residues predominate over residues Ser-110–Lys-132. Residues Val-142–Val-162 traverse the membrane as a helical segment. Positions Gly-143–Gly-147 are requires for dimerization and lipidd rafts association. Over Met-163–Pro-172 the chain is Cytoplasmic. A requires for interaction with MSN and EZR region spans residues Lys-164–Lys-165.

This sequence belongs to the podoplanin family. In terms of assembly, homodimer. Interacts with CLEC1B; the interaction is independent of CLEC1B glycosylation and activates CLEC1B; the interaction is dependent of sialic acid on O-glycans. Interacts with CD9; this interaction is homophilic and attenuates platelet aggregation and pulmonary metastasis induced by PDPN. Interacts with LGALS8; the interaction is glycosylation-dependent; may participate in connection of the lymphatic endothelium to the surrounding extracellular matrix. Interacts with HSPA9. Interacts (via extracellular domain) with CD44; this interaction is required for PDPN-mediated directional migration and regulation of lamellipodia extension/stabilization during cell spreading and migration. Interacts (via cytoplasmic domain) with MSN and EZR; activates RHOA and promotes epithelial-mesenchymal transition. Interacts with CCL21; relocalized PDPN to the basolateral membrane. Extensively O-glycosylated. Contains sialic acid residues. O-glycosylation is necessary for platelet aggregation activity. Disialylated at Thr-52; sialic acid is critical for platelet-aggregating activity and for CLEC1B interaction. In terms of processing, phosphorylated by PKA; decreases cell migration. Post-translationally, the N-terminus is blocked. Detected at high levels in lung and brain, at lower levels in kidney, stomach, liver, spleen and esophagus, and not detected in skin and small intestine. Expressed in epithelial cells of choroid plexus, ependyma, glomerulus and alveolus, in mesothelial cells and in endothelia of lymphatic vessels. Also expressed in stromal cells of peripheral lymphoid tissue and thymic epithelial cells. Detected in carcinoma cell lines and cultured fibroblasts. Expressed at higher levels in colon carcinomas than in normal colon tissue.

Its subcellular location is the membrane. It localises to the cell projection. It is found in the lamellipodium membrane. The protein localises to the filopodium membrane. The protein resides in the microvillus membrane. Its subcellular location is the ruffle membrane. It localises to the membrane raft. It is found in the apical cell membrane. The protein localises to the basolateral cell membrane. The protein resides in the invadopodium. Functionally, mediates effects on cell migration and adhesion through its different partners. During development plays a role in blood and lymphatic vessels separation by binding CLEC1B, triggering CLEC1B activation in platelets and leading to platelet activation and/or aggregation. Interaction with CD9, on the contrary, attenuates platelet aggregation and pulmonary metastasis induced by PDPN. Mediates effects on cell migration and adhesion through its different partners. Through MSN or EZR interaction promotes epithelial-mesenchymal transition (EMT) leading to ERZ phosphorylation and triggering RHOA activation leading to cell migration increase and invasiveness. Interaction with CD44 promotes directional cell migration in epithelial and tumor cells. In lymph nodes (LNs), controls fibroblastic reticular cells (FRCs) adhesion to the extracellular matrix (ECM) and contraction of the actomyosin by maintaining ERM proteins (EZR; MSN and RDX) and MYL9 activation through association with unknown transmembrane proteins. Engagement of CLEC1B by PDPN promotes FRCs relaxation by blocking lateral membrane interactions leading to reduction of ERM proteins (EZR; MSN and RDX) and MYL9 activation. Through binding with LGALS8 may participate in connection of the lymphatic endothelium to the surrounding extracellular matrix. In keratinocytes, induces changes in cell morphology showing an elongated shape, numerous membrane protrusions, major reorganization of the actin cytoskeleton, increased motility and decreased cell adhesion. Controls invadopodia stability and maturation leading to efficient degradation of the extracellular matrix (ECM) in tumor cells through modulation of RHOC activity in order to activate ROCK1/ROCK2 and LIMK1/LIMK2 and inactivation of CFL1. Required for normal lung cell proliferation and alveolus formation at birth. Does not function as a water channel or as a regulator of aquaporin-type water channels. Does not have any effect on folic acid or amino acid transport. In Mus musculus (Mouse), this protein is Podoplanin.